Reading from the N-terminus, the 222-residue chain is Glutathione S-transferase A2 (222 aa).

Ala-2 is subject to N-acetylalanine. In terms of domain architecture, GST N-terminal spans 3 to 83 (EKPKLHYSNI…YIASKYNLYG (81 aa)). Residue Lys-4 is modified to N6-succinyllysine. Glutathione contacts are provided by residues Tyr-9, Arg-45, 54 to 55 (QV), and 67 to 68 (QT). One can recognise a GST C-terminal domain in the interval 85 to 207 (DIKEKALIDM…LQPGSPRKPP (123 aa)). Positions 199–222 (QPGSPRKPPMDEKSLEESRKIFRF) are disordered. Residues 206–222 (PPMDEKSLEESRKIFRF) show a composition bias toward basic and acidic residues.

Belongs to the GST superfamily. Alpha family. Homodimer or heterodimer of GSTA1 and GSTA2. Liver.

It localises to the cytoplasm. The catalysed reaction is RX + glutathione = an S-substituted glutathione + a halide anion + H(+). Functionally, catalyzes the conjugation of glutathione to a large variety of electrophilic compounds. This Homo sapiens (Human) protein is Glutathione S-transferase A2 (GSTA2).